Here is an 84-residue protein sequence, read N- to C-terminus: Turripeptide IX-03 (84 aa).

Positions 1–21 (MGFYMLLTVALLLTSLMNVEA) are cleaved as a signal peptide. Residues 22-39 (TPVDQAERSALEKSGLGN) constitute a propeptide that is removed on maturation. 3 disulfide bridges follow: C48–C70, C55–C74, and C60–C81.

In terms of tissue distribution, expressed by the venom duct.

Its subcellular location is the secreted. In Gemmula speciosa (Splendid gem-turris), this protein is Turripeptide IX-03.